We begin with the raw amino-acid sequence, 166 residues long: Endoribonuclease YbeY (166 aa).

Positions 132, 136, and 142 each coordinate Zn(2+).

Belongs to the endoribonuclease YbeY family. Zn(2+) is required as a cofactor.

The protein localises to the cytoplasm. Single strand-specific metallo-endoribonuclease involved in late-stage 70S ribosome quality control and in maturation of the 3' terminus of the 16S rRNA. The chain is Endoribonuclease YbeY from Clostridium botulinum (strain Kyoto / Type A2).